A 395-amino-acid polypeptide reads, in one-letter code: Succinyl-diaminopimelate desuccinylase (395 aa).

His-81 serves as a coordination point for Zn(2+). Asp-83 is an active-site residue. Position 114 (Asp-114) interacts with Zn(2+). Glu-146 functions as the Proton acceptor in the catalytic mechanism. Positions 147, 175, and 364 each coordinate Zn(2+).

Belongs to the peptidase M20A family. DapE subfamily. Homodimer. Zn(2+) serves as cofactor. It depends on Co(2+) as a cofactor.

The enzyme catalyses N-succinyl-(2S,6S)-2,6-diaminopimelate + H2O = (2S,6S)-2,6-diaminopimelate + succinate. Its pathway is amino-acid biosynthesis; L-lysine biosynthesis via DAP pathway; LL-2,6-diaminopimelate from (S)-tetrahydrodipicolinate (succinylase route): step 3/3. Functionally, catalyzes the hydrolysis of N-succinyl-L,L-diaminopimelic acid (SDAP), forming succinate and LL-2,6-diaminopimelate (DAP), an intermediate involved in the bacterial biosynthesis of lysine and meso-diaminopimelic acid, an essential component of bacterial cell walls. This is Succinyl-diaminopimelate desuccinylase from Parvibaculum lavamentivorans (strain DS-1 / DSM 13023 / NCIMB 13966).